The following is a 234-amino-acid chain: Uridylate kinase (234 aa).

Residue 10–11 (GS) participates in ATP binding. UMP is bound at residue G44. G45 and R49 together coordinate ATP. UMP contacts are provided by residues D66 and 114–120 (ITPAQTT). 3 residues coordinate ATP: T140, Y146, and D149.

The protein belongs to the UMP kinase family. As to quaternary structure, homohexamer.

It is found in the cytoplasm. It catalyses the reaction UMP + ATP = UDP + ADP. It participates in pyrimidine metabolism; CTP biosynthesis via de novo pathway; UDP from UMP (UMPK route): step 1/1. With respect to regulation, inhibited by UTP. Catalyzes the reversible phosphorylation of UMP to UDP. The chain is Uridylate kinase from Methanoculleus marisnigri (strain ATCC 35101 / DSM 1498 / JR1).